The following is a 1226-amino-acid chain: Probable phosphorylase b kinase regulatory subunit alpha (1226 aa).

The interval 666 to 688 is disordered; sequence NEKITTPRGPRTLRRGESVKDRS. Residues 679 to 688 show a composition bias toward basic and acidic residues; sequence RRGESVKDRS.

It belongs to the phosphorylase b kinase regulatory chain family.

The protein operates within glycan biosynthesis; glycogen metabolism. Its function is as follows. Phosphorylase b kinase catalyzes the phosphorylation of serine in certain substrates, including troponin I. The alpha chain may bind calmodulin. In Caenorhabditis elegans, this protein is Probable phosphorylase b kinase regulatory subunit alpha.